Here is an 815-residue protein sequence, read N- to C-terminus: Phosphate transporter PHO1-2 (815 aa).

The Cytoplasmic segment spans residues 1-421 (MVKFSREYEA…QQPRNTHMIT (421 aa)). The 367-residue stretch at 2-368 (VKFSREYEAS…EQQRATDLFS (367 aa)) folds into the SPX domain. Disordered regions lie at residues 83–108 (SAGQ…STDK), 166–213 (RGLA…LELQ), and 242–266 (AGKK…GGGG). The segment covering 97–108 (PDRGELVRSTDK) has biased composition (basic and acidic residues). The segment covering 183–201 (PPSSVHGSSGRYLLSGLSS) has biased composition (low complexity). The segment covering 202–213 (PQSMSDGSLELQ) has biased composition (polar residues). Residues 243 to 254 (GKKDGKTKDGSG) show a composition bias toward basic and acidic residues. Gly residues predominate over residues 255-266 (KGRGGGGGGGGG). A helical membrane pass occupies residues 422 to 442 (FLVGLFTGTFVSLFIIYAILA). Residues 443–458 (HVSGIFTSTGNSAYME) lie on the Extracellular side of the membrane. The helical transmembrane segment at 459-479 (IVYHVFSMFALISLHIFLYGC) threads the bilayer. Residues 480 to 508 (NLFMWKNTRINHNFIFDFSSNTALTHRDA) lie on the Cytoplasmic side of the membrane. The chain crosses the membrane as a helical span at residues 509-529 (FLMSASIMCTVVAALVINLFL). Residues 530–538 (KNAGVAYAN) lie on the Extracellular side of the membrane. The helical transmembrane segment at 539–559 (ALPGALLLLSTGVLFCPFDIF) threads the bilayer. The Cytoplasmic portion of the chain corresponds to 560-686 (YRSTRYCFMR…VRFKYAATPT (127 aa)). Positions 624-815 (TSGQQYKHLA…PLPFRELETD (192 aa)) constitute an EXS domain. Residues 687–707 (PFWVWMVIISSSGATIYQLYW) form a helical membrane-spanning segment. Residues 708–734 (DFVKDWGFLNPKSKNRWLRNELILKNK) are Extracellular-facing. The chain crosses the membrane as a helical span at residues 735 to 751 (SIYYVSMMLNLALRLAW). At 752 to 815 (TESVMKIHIG…PLPFRELETD (64 aa)) the chain is on the cytoplasmic side.

This sequence belongs to the SYG1 (TC 2.A.94) family. Specifically expressed in roots.

The protein resides in the cell membrane. In terms of biological role, involved in the transfer of inorganic phosphate (Pi) from roots to shoots. This is Phosphate transporter PHO1-2 (PHO1-2) from Oryza sativa subsp. japonica (Rice).